A 192-amino-acid chain; its full sequence is Phosphoheptose isomerase (192 aa).

An SIS domain is found at 37 to 192 (LADSFKAGGK…IQLIEKEMVK (156 aa)). 52-54 (NGG) provides a ligand contact to substrate. Zn(2+)-binding residues include His-61 and Glu-65. Substrate contacts are provided by residues Glu-65, 93–94 (ND), 119–121 (STS), Ser-124, and Gln-172. The Zn(2+) site is built by Gln-172 and His-180.

It belongs to the SIS family. GmhA subfamily. Homotetramer. Requires Zn(2+) as cofactor.

Its subcellular location is the cytoplasm. The enzyme catalyses 2 D-sedoheptulose 7-phosphate = D-glycero-alpha-D-manno-heptose 7-phosphate + D-glycero-beta-D-manno-heptose 7-phosphate. It functions in the pathway carbohydrate biosynthesis; D-glycero-D-manno-heptose 7-phosphate biosynthesis; D-glycero-alpha-D-manno-heptose 7-phosphate and D-glycero-beta-D-manno-heptose 7-phosphate from sedoheptulose 7-phosphate: step 1/1. Its function is as follows. Catalyzes the isomerization of sedoheptulose 7-phosphate in D-glycero-D-manno-heptose 7-phosphate. The chain is Phosphoheptose isomerase from Salmonella dublin (strain CT_02021853).